We begin with the raw amino-acid sequence, 212 residues long: Putative DNA-binding protein At1g48610 (212 aa).

Residues 1-130 (MAKTALTPPA…GRPKKDDVAA (130 aa)) are disordered. Residues 27-44 (NKPQTDATGVSATDTASQ) are compositionally biased toward polar residues. 3 consecutive DNA-binding regions (a.T hook) follow at residues 45 to 56 (KRGRGRPPKAKS), 70 to 79 (TKPSGRPKRN), and 94 to 98 (KKRGR). The span at 57–72 (DSSQIGAVSAKASTKP) shows a compositional bias: polar residues. Over residues 103 to 113 (TVTAAVVTTAT) the composition is skewed to low complexity. A DNA-binding region (a.T hook 4) is located at residues 118–127 (RKRGRPKKDD). Residues 176-210 (DLKKRTALLQKKVKEAAAKLKQAVTAIDEVQKLAD) adopt a coiled-coil conformation.

The protein localises to the nucleus. May bind DNA. The chain is Putative DNA-binding protein At1g48610 from Arabidopsis thaliana (Mouse-ear cress).